A 364-amino-acid polypeptide reads, in one-letter code: Fructose-bisphosphate aldolase C (364 aa).

Phosphotyrosine is present on Y5. Residues S36, S39, and S45 each carry the phosphoserine modification. R56 contacts substrate. N6-acetyllysine is present on K111. Residue S132 is modified to Phosphoserine. K147 is a substrate binding site. The active-site Proton acceptor is E188. Residue K230 is the Schiff-base intermediate with dihydroxyacetone-P of the active site.

The protein belongs to the class I fructose-bisphosphate aldolase family. As to quaternary structure, homotetramer. Interacts with ATP6V1E1.

It catalyses the reaction beta-D-fructose 1,6-bisphosphate = D-glyceraldehyde 3-phosphate + dihydroxyacetone phosphate. It functions in the pathway carbohydrate degradation; glycolysis; D-glyceraldehyde 3-phosphate and glycerone phosphate from D-glucose: step 4/4. In Macaca fascicularis (Crab-eating macaque), this protein is Fructose-bisphosphate aldolase C (ALDOC).